Reading from the N-terminus, the 619-residue chain is Sodium-coupled monocarboxylate transporter 2 (619 aa).

The Extracellular portion of the chain corresponds to 1–9; that stretch reads MRVKNFEAW. Residues 10 to 30 form a helical membrane-spanning segment; it reads DYVVFAGLFVISSGIGVFFAI. The Cytoplasmic portion of the chain corresponds to 31-47; that stretch reads KERKKTTSREFLVGGRQ. A helical membrane pass occupies residues 48 to 68; that stretch reads MSFGPVALSLTASFMSAVTVL. Residues 69–80 lie on the Extracellular side of the membrane; it reads GTPAEVYRFGAS. Residues 81-101 traverse the membrane as a helical segment; it reads FFLFLISYVFVVFFTSELFLP. Topologically, residues 102–128 are cytoplasmic; sequence VFYRSGITSTYEYLQLRFNKPVRYAAT. Residues 129-149 traverse the membrane as a helical segment; the sequence is IIYIVQTILYTGVVVYAPALA. Residues 150 to 157 are Extracellular-facing; it reads LNQVTGFN. A helical membrane pass occupies residues 158 to 178; the sequence is LWASVFATGIVCTFYCSLGGL. Topologically, residues 179 to 180 are cytoplasmic; that stretch reads KA. The helical transmembrane segment at 181–201 threads the bilayer; the sequence is VVWTDAFQMVVMIVGFLTVLI. Residues 202-235 lie on the Extracellular side of the membrane; that stretch reads QGSNHVGGFNNVLEKAGNGSRLHIVDFDVDPLRR. A glycan (N-linked (GlcNAc...) asparagine) is linked at Asn-219. Residues 236–256 form a helical membrane-spanning segment; it reads HTFWTITIGGTFTWLGVYGVN. Topologically, residues 257–275 are cytoplasmic; sequence QSTIQRCISCKTEKHAKLA. The chain crosses the membrane as a helical span at residues 276–296; it reads LYFNLLGLWIIVACAVFSGLI. At 297 to 321 the chain is on the extracellular side; sequence MYSHFKDCDPWTSGVISAPDQLMPY. Residues 322–342 form a helical membrane-spanning segment; the sequence is FVMEIFATMPGLPGLFVACAF. Residues 343–385 lie on the Cytoplasmic side of the membrane; it reads SGTLSTVAASINALATVTFEDFVKSCFPHLSDKLSTWISKGLC. The helical transmembrane segment at 386-406 threads the bilayer; it reads ILFGIMCTSMAVVASLMGSVV. Topologically, residues 407–411 are extracellular; it reads QAALS. Residues 412 to 432 traverse the membrane as a helical segment; the sequence is IHGMCGGPMLGLFTLGLVFPF. Residues 433 to 437 lie on the Cytoplasmic side of the membrane; that stretch reads VNWKG. Residues 438–458 traverse the membrane as a helical segment; that stretch reads ALGGLLTGITLSFWVAIGSFI. Residues 459–504 are Extracellular-facing; that stretch reads YPAPESKTLPLPLSTEHCVELNITTTVAPQISSRPVLADTWYSLSY. The N-linked (GlcNAc...) asparagine glycan is linked to Asn-480. Residues 505-525 traverse the membrane as a helical segment; sequence LYFSAVGCLGCIAAGIIISFL. Topologically, residues 526–619 are cytoplasmic; sequence TGKQRGKDID…NSVPEKTTYF (94 aa).

Belongs to the sodium:solute symporter (SSF) (TC 2.A.21) family. As to expression, expressed in the cortical region of the kidney corresponding to the proximal tubule. Expressed in Mueller cells of the inner retina (at protein level). Isoform 1 is expressed in the retina, kidney, small intestine and skeletal muscle. Isoform 2 is not detected in the kidney, small intestine and skeletal muscle. In the kidney, expressed predominantly in tubular epithelial cells of the cortical region and in the convoluted portions of the proximal tubule (pars convoluta). In the small intestine, its expression is highest in the proximal part and gradually decreased towards the distal end. Expressed in the neural retina. Not detected in the caecum and colon.

It is found in the apical cell membrane. It catalyses the reaction (S)-lactate(out) + Na(+)(out) = (S)-lactate(in) + Na(+)(in). The enzyme catalyses nicotinate(out) + Na(+)(out) = nicotinate(in) + Na(+)(in). It carries out the reaction pyruvate(out) + Na(+)(out) = pyruvate(in) + Na(+)(in). The catalysed reaction is propanoate(out) + Na(+)(out) = propanoate(in) + Na(+)(in). It catalyses the reaction butanoate(out) + Na(+)(out) = butanoate(in) + Na(+)(in). The enzyme catalyses acetoacetate(out) + Na(+)(out) = acetoacetate(in) + Na(+)(in). Acts as an electroneutral and low-affinity sodium (Na(+))-dependent sodium-coupled solute transporter. Catalyzes the transport across the plasma membrane of many monocarboxylates such as lactate, pyruvate, nicotinate, propionate, butyrate and beta-D-hydroxybutyrate. May be responsible for the first step of reabsorption of monocarboxylates from the lumen of the proximal tubule of the kidney and the small intestine. May play also a role in monocarboxylates transport in the retina. Mediates electroneutral uptake of lactate, with a stoichiometry of 2 Na(+) for each lactate. The sequence is that of Sodium-coupled monocarboxylate transporter 2 (Slc5a12) from Mus musculus (Mouse).